The following is a 518-amino-acid chain: uncharacterized protein (518 aa).

It is found in the virion. This is an uncharacterized protein from Acanthamoeba polyphaga (Amoeba).